Consider the following 475-residue polypeptide: Doublecortin domain-containing protein 2 (475 aa).

Doublecortin domains are found at residues 17-100 (KSVL…LNYL) and 139-221 (CTIF…LPYS). A disordered region spans residues 234-475 (YGQKASSLPP…EANKASSAVA (242 aa)). A compositionally biased stretch (polar residues) spans 252–272 (GSGNYRQSKSTIGSSDNSSPQ). A Phosphoserine modification is found at Ser-270. Residues 353-365 (EKTSKDANQKEDF) are compositionally biased toward basic and acidic residues. Residues 407-425 (TDEENGEELDQVAEELQPT) are compositionally biased toward acidic residues.

As to quaternary structure, interacts with DVL1, DVL2 and DVL3. Expressed in hair cells of the inner ear.

The protein resides in the cell projection. It is found in the cilium. Its subcellular location is the cytoplasm. It localises to the cytoskeleton. The protein localises to the cilium axoneme. The protein resides in the kinocilium. Functionally, protein that plays a role in the inhibition of canonical Wnt signaling pathway. May be involved in neuronal migration during development of the cerebral neocortex. Involved in the control of ciliogenesis and ciliary length. This is Doublecortin domain-containing protein 2 (Dcdc2) from Mus musculus (Mouse).